Consider the following 336-residue polypeptide: Ketol-acid reductoisomerase (NADP(+)) (336 aa).

In terms of domain architecture, KARI N-terminal Rossmann spans 5–185 (SKIYTDKDSN…GATRAGVIPT (181 aa)). NADP(+) is bound by residues 28–31 (YGSQ), Ser56, and 86–89 (DMVQ). His111 is an active-site residue. Position 137 (Gly137) interacts with NADP(+). The 146-residue stretch at 186-331 (TFKEETETDL…NQLKDLIQKG (146 aa)) folds into the KARI C-terminal knotted domain. Asp194, Glu198, Glu230, and Glu234 together coordinate Mg(2+). Ser255 provides a ligand contact to substrate.

Belongs to the ketol-acid reductoisomerase family. Mg(2+) serves as cofactor.

The catalysed reaction is (2R)-2,3-dihydroxy-3-methylbutanoate + NADP(+) = (2S)-2-acetolactate + NADPH + H(+). The enzyme catalyses (2R,3R)-2,3-dihydroxy-3-methylpentanoate + NADP(+) = (S)-2-ethyl-2-hydroxy-3-oxobutanoate + NADPH + H(+). It participates in amino-acid biosynthesis; L-isoleucine biosynthesis; L-isoleucine from 2-oxobutanoate: step 2/4. Its pathway is amino-acid biosynthesis; L-valine biosynthesis; L-valine from pyruvate: step 2/4. Functionally, involved in the biosynthesis of branched-chain amino acids (BCAA). Catalyzes an alkyl-migration followed by a ketol-acid reduction of (S)-2-acetolactate (S2AL) to yield (R)-2,3-dihydroxy-isovalerate. In the isomerase reaction, S2AL is rearranged via a Mg-dependent methyl migration to produce 3-hydroxy-3-methyl-2-ketobutyrate (HMKB). In the reductase reaction, this 2-ketoacid undergoes a metal-dependent reduction by NADPH to yield (R)-2,3-dihydroxy-isovalerate. This chain is Ketol-acid reductoisomerase (NADP(+)), found in Saccharolobus islandicus (strain Y.N.15.51 / Yellowstone #2) (Sulfolobus islandicus).